Here is a 419-residue protein sequence, read N- to C-terminus: Protein phosphatase methylesterase 1 (419 aa).

A compositionally biased stretch (basic residues) spans 1 to 12 (MSQLHRGMHKKP). Residues 1 to 75 (MSQLHRGMHK…KSAASPTVPA (75 aa)) form a disordered region. The span at 32-52 (TETEETVECTEEEEEQDETDG) shows a compositional bias: acidic residues. Catalysis depends on residues Ser-230, Asp-256, and His-383.

Belongs to the AB hydrolase superfamily.

The catalysed reaction is [phosphatase 2A protein]-C-terminal L-leucine methyl ester + H2O = [phosphatase 2A protein]-C-terminal L-leucine + methanol + H(+). Demethylates proteins that have been reversibly carboxymethylated. Demethylates the phosphatase PP2A catalytic subunit. This is Protein phosphatase methylesterase 1 (PPE1) from Yarrowia lipolytica (strain CLIB 122 / E 150) (Yeast).